A 223-amino-acid chain; its full sequence is Cytidylate kinase (223 aa).

Residues 1 to 23 form a disordered region; that stretch reads MSTSPLVIAIDGPSGSGKSSTSR. 12–20 lines the ATP pocket; sequence GPSGSGKSS.

Belongs to the cytidylate kinase family. Type 1 subfamily.

The protein resides in the cytoplasm. It catalyses the reaction CMP + ATP = CDP + ADP. It carries out the reaction dCMP + ATP = dCDP + ADP. This is Cytidylate kinase from Cutibacterium acnes (strain DSM 16379 / KPA171202) (Propionibacterium acnes).